We begin with the raw amino-acid sequence, 891 residues long: Translation initiation factor IF-2 (891 aa).

A tr-type G domain is found at 390-559 (NRAPIVTIMG…LLQSDMLELK (170 aa)). The G1 stretch occupies residues 399–406 (GHVDHGKT). GTP is bound at residue 399–406 (GHVDHGKT). Residues 424 to 428 (GITQS) are G2. The tract at residues 445 to 448 (DTPG) is G3. GTP is bound by residues 445-449 (DTPGH) and 499-502 (NKID). The tract at residues 499–502 (NKID) is G4. A G5 region spans residues 535–537 (SAT).

This sequence belongs to the TRAFAC class translation factor GTPase superfamily. Classic translation factor GTPase family. IF-2 subfamily.

The protein resides in the cytoplasm. In terms of biological role, one of the essential components for the initiation of protein synthesis. Protects formylmethionyl-tRNA from spontaneous hydrolysis and promotes its binding to the 30S ribosomal subunits. Also involved in the hydrolysis of GTP during the formation of the 70S ribosomal complex. This chain is Translation initiation factor IF-2, found in Blochmanniella pennsylvanica (strain BPEN).